The sequence spans 364 residues: MLKRTPLFSVYARCGAKTIEFGGWEMPVQFSSIKEEHEAVRTRAGLFDVSHMGEIVVRGRGSLAFLQKLMTNDVAKLRPGRAQYTLMCYEDGGTVDDLLIYQKGENDYLLVVNAANTEKDFAWLSGHVEGDVELQDVSSETAQLALQGPAAERVLQRLTDFDLAALRPFSFADGVEVSGVKALVSRTGYTGEDGFELYCKAEDAAALWEAILAAGARDSVLPCGLGARDTLRFEACLPLYGQELSDSISPVEAGLGFAVKTEKETPFIGQAVLKRQKEEGPPRRLVGIEMIDRGIPRHGYLVFADGEEVGFVTTGTQSPTLKKNIGLALVKADVAAIGREVEVDIRGKRLKANIVPIPFYRRAK.

The protein belongs to the GcvT family. The glycine cleavage system is composed of four proteins: P, T, L and H.

The catalysed reaction is N(6)-[(R)-S(8)-aminomethyldihydrolipoyl]-L-lysyl-[protein] + (6S)-5,6,7,8-tetrahydrofolate = N(6)-[(R)-dihydrolipoyl]-L-lysyl-[protein] + (6R)-5,10-methylene-5,6,7,8-tetrahydrofolate + NH4(+). In terms of biological role, the glycine cleavage system catalyzes the degradation of glycine. This chain is Aminomethyltransferase, found in Geobacillus kaustophilus (strain HTA426).